A 124-amino-acid chain; its full sequence is Large ribosomal subunit protein bL12 (124 aa).

It belongs to the bacterial ribosomal protein bL12 family. As to quaternary structure, homodimer. Part of the ribosomal stalk of the 50S ribosomal subunit. Forms a multimeric L10(L12)X complex, where L10 forms an elongated spine to which 2 to 4 L12 dimers bind in a sequential fashion. Binds GTP-bound translation factors.

Its function is as follows. Forms part of the ribosomal stalk which helps the ribosome interact with GTP-bound translation factors. Is thus essential for accurate translation. This is Large ribosomal subunit protein bL12 from Phocaeicola vulgatus (strain ATCC 8482 / DSM 1447 / JCM 5826 / CCUG 4940 / NBRC 14291 / NCTC 11154) (Bacteroides vulgatus).